We begin with the raw amino-acid sequence, 161 residues long: Large ribosomal subunit protein bL17 (161 aa).

Residues 126–161 (KVAKKATRTRRSKKTTEAAPAAEVPATEEPKAESAE) are disordered. Positions 129–138 (KKATRTRRSK) are enriched in basic residues. The segment covering 142 to 152 (EAAPAAEVPAT) has biased composition (low complexity).

The protein belongs to the bacterial ribosomal protein bL17 family. Part of the 50S ribosomal subunit. Contacts protein L32.

This Bacteroides fragilis (strain ATCC 25285 / DSM 2151 / CCUG 4856 / JCM 11019 / LMG 10263 / NCTC 9343 / Onslow / VPI 2553 / EN-2) protein is Large ribosomal subunit protein bL17.